The sequence spans 253 residues: rRNA adenine N-6-methyltransferase (253 aa).

S-adenosyl-L-methionine is bound by residues Asn14, Leu16, Gly40, Glu61, Asp85, and Asn101. Positions 229-253 (CAREESTPRPYLPDCTPTTGSISSR) are disordered. Over residues 244–253 (TPTTGSISSR) the composition is skewed to polar residues.

This sequence belongs to the class I-like SAM-binding methyltransferase superfamily. rRNA adenine N(6)-methyltransferase family.

Functionally, involved in erythromycin resistance. This is rRNA adenine N-6-methyltransferase (ermA) from Corynebacterium diphtheriae.